The sequence spans 79 residues: Exodeoxyribonuclease 7 small subunit (79 aa).

This sequence belongs to the XseB family. In terms of assembly, heterooligomer composed of large and small subunits.

It localises to the cytoplasm. It carries out the reaction Exonucleolytic cleavage in either 5'- to 3'- or 3'- to 5'-direction to yield nucleoside 5'-phosphates.. Functionally, bidirectionally degrades single-stranded DNA into large acid-insoluble oligonucleotides, which are then degraded further into small acid-soluble oligonucleotides. The polypeptide is Exodeoxyribonuclease 7 small subunit (Shouchella clausii (strain KSM-K16) (Alkalihalobacillus clausii)).